Here is an 827-residue protein sequence, read N- to C-terminus: Inactive rhomboid protein 2 (827 aa).

Positions 1–87 are disordered; that stretch reads MDSTDKNGES…GFRRQASLSQ (87 aa). The Cytoplasmic portion of the chain corresponds to 1-380; the sequence is MDSTDKNGES…HRPYFTYWLT (380 aa). S60 carries the phosphoserine modification. The span at 64–77 shows a compositional bias: basic and acidic residues; the sequence is QRGRWQEGSSEKRP. Phosphoserine is present on residues S84, S88, S294, S296, and S299. A helical membrane pass occupies residues 381-401; the sequence is FVHIIITLLVICTYGIAPVGF. Residues 402-631 lie on the Lumenal side of the membrane; it reads AQHVTTQLVL…PDQFYRLWLS (230 aa). The helical transmembrane segment at 632–652 threads the bilayer; the sequence is LFLHAGVVHCLVSVVFQMTIL. At 653–663 the chain is on the cytoplasmic side; sequence RDLEKLAGWHR. A helical transmembrane segment spans residues 664-684; that stretch reads IAIIFILSGITGNLASAIFLP. Residues 685–686 are Lumenal-facing; sequence YR. Residues 687–707 traverse the membrane as a helical segment; it reads AEVGPAGSQFGLLACLFVELF. The Cytoplasmic segment spans residues 708–718; sequence QSWQLLERPWK. The helical transmembrane segment at 719 to 739 threads the bilayer; it reads AFLNLSAIVLFLFICGLLPWI. Residues 740 to 744 are Lumenal-facing; that stretch reads DNIAH. A helical membrane pass occupies residues 745–765; that stretch reads IFGFLSGLLLAFAFLPYITFG. The Cytoplasmic portion of the chain corresponds to 766 to 773; sequence TSDKYRKR. A helical membrane pass occupies residues 774 to 794; the sequence is ALILVSLLVFAGLFASLVIWL. The Lumenal portion of the chain corresponds to 795-827; sequence YVYPINWPWIEYLTCFPFTSRFCEKYELDQVLH.

It belongs to the peptidase S54 family. As to quaternary structure, interacts with EGF. Interacts (via cytoplasmic N-terminus) with FRMD8/iTAP; this interaction leads to mutual protein stabilization. Interacts with ADAM17/TACE. Detected in retina and spleen.

It localises to the endoplasmic reticulum membrane. The protein resides in the cell membrane. In terms of biological role, regulates ADAM17 protease, a sheddase of the epidermal growth factor (EGF) receptor ligands and TNF, thereby plays a role in sleep, cell survival, proliferation, migration and inflammation. Does not exhibit any protease activity on its own. This chain is Inactive rhomboid protein 2 (RHBDF2), found in Canis lupus familiaris (Dog).